We begin with the raw amino-acid sequence, 432 residues long: ATP-dependent RNA helicase RhlB (432 aa).

A Q motif motif is present at residues 9-37 (QRFADLPLHAEVIQALNENGFEFCTPIQA). The region spanning 40 to 219 (LPVLLKAKDI…YDHMNDPEKV (180 aa)) is the Helicase ATP-binding domain. 53-60 (AQTGTGKT) is a binding site for ATP. Residues 165–168 (DEAD) carry the DEAD box motif. The Helicase C-terminal domain maps to 243-390 (KMRLLLTLME…VSRYDREALL (148 aa)). Positions 395–432 (TPVKIHRKHPTSRTRDGAKGAHRSGGARPPRHRTRRPS) are disordered. Over residues 423-432 (PPRHRTRRPS) the composition is skewed to basic residues.

The protein belongs to the DEAD box helicase family. RhlB subfamily. Component of the RNA degradosome, which is a multiprotein complex involved in RNA processing and mRNA degradation.

Its subcellular location is the cytoplasm. It catalyses the reaction ATP + H2O = ADP + phosphate + H(+). Functionally, DEAD-box RNA helicase involved in RNA degradation. Has RNA-dependent ATPase activity and unwinds double-stranded RNA. The sequence is that of ATP-dependent RNA helicase RhlB from Shewanella denitrificans (strain OS217 / ATCC BAA-1090 / DSM 15013).